We begin with the raw amino-acid sequence, 415 residues long: [Pyruvate dehydrogenase (acetyl-transferring)] kinase isozyme 3, mitochondrial (415 aa).

In terms of domain architecture, Histidine kinase spans 131–362 (IEYKEKFGFD…DAVIYLKALS (232 aa)). Position 247-254 (247-254 (ELFKNSMR)) interacts with ATP. Lysine 278 is subject to N6-succinyllysine. Residues aspartate 287, 306–307 (ST), and 323–328 (GFGYGL) each bind ATP. The disordered stretch occupies residues 383 to 415 (TPEADDWSNPSSEPRDASKYKAKQDKIKSNRTF). Residues 395-415 (EPRDASKYKAKQDKIKSNRTF) are compositionally biased toward basic and acidic residues.

It belongs to the PDK/BCKDK protein kinase family. In terms of assembly, homodimer. Interacts with the pyruvate dehydrogenase complex subunit DLAT, and is part of the multimeric pyruvate dehydrogenase complex that contains multiple copies of pyruvate dehydrogenase (E1), dihydrolipoamide acetyltransferase (DLAT, E2) and lipoamide dehydrogenase (DLD, E3).

Its subcellular location is the mitochondrion matrix. The enzyme catalyses L-seryl-[pyruvate dehydrogenase E1 alpha subunit] + ATP = O-phospho-L-seryl-[pyruvate dehydrogenase E1 alpha subunit] + ADP + H(+). Inhibits pyruvate dehydrogenase activity by phosphorylation of the E1 subunit PDHA1, and thereby regulates glucose metabolism and aerobic respiration. Can also phosphorylate PDHA2. Decreases glucose utilization and increases fat metabolism in response to prolonged fasting, and as adaptation to a high-fat diet. Plays a role in glucose homeostasis and in maintaining normal blood glucose levels in function of nutrient levels and under starvation. Plays a role in the generation of reactive oxygen species. The protein is [Pyruvate dehydrogenase (acetyl-transferring)] kinase isozyme 3, mitochondrial (Pdk3) of Mus musculus (Mouse).